We begin with the raw amino-acid sequence, 360 residues long: Peptide chain release factor 1 (360 aa).

Q235 carries the N5-methylglutamine modification. Over residues 284 to 295 the composition is skewed to basic and acidic residues; it reads ERQEQAQADTRR. Residues 284–309 are disordered; it reads ERQEQAQADTRRNLLGSGDRSDKIRT.

The protein belongs to the prokaryotic/mitochondrial release factor family. Methylated by PrmC. Methylation increases the termination efficiency of RF1.

Its subcellular location is the cytoplasm. Peptide chain release factor 1 directs the termination of translation in response to the peptide chain termination codons UAG and UAA. The sequence is that of Peptide chain release factor 1 (prfA) from Pasteurella multocida (strain Pm70).